The chain runs to 156 residues: Lipoprotein signal peptidase (156 aa).

2 helical membrane-spanning segments follow: residues 52 to 72 (ILEG…IGIV) and 85 to 105 (FATA…DRIF). Active-site residues include Asp111 and Asp129. The helical transmembrane segment at 121–141 (NFPIFNVADSALCVGVGILFL) threads the bilayer.

The protein belongs to the peptidase A8 family.

The protein resides in the cell membrane. The catalysed reaction is Release of signal peptides from bacterial membrane prolipoproteins. Hydrolyzes -Xaa-Yaa-Zaa-|-(S,diacylglyceryl)Cys-, in which Xaa is hydrophobic (preferably Leu), and Yaa (Ala or Ser) and Zaa (Gly or Ala) have small, neutral side chains.. It participates in protein modification; lipoprotein biosynthesis (signal peptide cleavage). Its function is as follows. This protein specifically catalyzes the removal of signal peptides from prolipoproteins. The protein is Lipoprotein signal peptidase of Halalkalibacterium halodurans (strain ATCC BAA-125 / DSM 18197 / FERM 7344 / JCM 9153 / C-125) (Bacillus halodurans).